We begin with the raw amino-acid sequence, 1461 residues long: MAAERGARRLLSTPSFWLYCLLLLGRRAPGAAAARSGSAPQSPGASIRTFTPFYFLVEPVDTLSVRGSSVILNCSAYSEPSPKIEWKKDGTFLNLVSDDRRQLLPDGSLFISNVVHSKHNKPDEGYYQCVATVESLGTIISRTAKLIVAGLPRFTSQPEPSSVYAGNNAILNCEVNADLVPFVRWEQNRQPLLLDDRVIKLPSGMLVISNATEGDGGLYRCVVESGGPPKYSDEVELKVLPDPEVISDLVFLKQPSPLVRVIGQDVVLPCVASGLPTPTIKWMKNEEALDTESSERLVLLAGGSLEISDVTEDDAGTYFCIADNGNETIEAQAELTVQAQPEFLKQPTNIYAHESMDIVFECEVTGKPTPTVKWVKNGDMVIPSDYFKIVKEHNLQVLGLVKSDEGFYQCIAENDVGNAQAGAQLIILEHAPATTGPLPSAPRDVVASLVSTRFIKLTWRTPASDPHGDNLTYSVFYTKEGIARERVENTSHPGEMQVTIQNLMPATVYIFRVMAQNKHGSGESSAPLRVETQPEVQLPGPAPNLRAYAASPTSITVTWETPVSGNGEIQNYKLYYMEKGTDKEQDVDVSSHSYTINGLKKYTEYSFRVVAYNKHGPGVSTPDVAVRTLSDVPSAAPQNLSLEVRNSKSIMIHWQPPAPATQNGQITGYKIRYRKASRKSDVTETLVSGTQLSQLIEGLDRGTEYNFRVAALTINGTGPATDWLSAETFESDLDETRVPEVPSSLHVRPLVTSIVVSWTPPENQNIVVRGYAIGYGIGSPHAQTIKVDYKQRYYTIENLDPSSHYVITLKAFNNVGEGIPLYESAVTRPHTDTSEVDLFVINAPYTPVPDPTPMMPPVGVQASILSHDTIRITWADNSLPKHQKITDSRYYTVRWKTNIPANTKYKNANATTLSYLVTGLKPNTLYEFSVMVTKGRRSSTWSMTAHGTTFELVPTSPPKDVTVVSKEGKPKTIIVNWQPPSEANGKITGYIIYYSTDVNAEIHDWVIEPVVGNRLTHQIQELTLDTPYYFKIQARNSKGMGPMSEAVQFRTPKADSSDKMPNDQASGSGGKGSRLPDLGSDYKPPMSGSNSPHGSPTSPLDSNMLLVIIVSVGVITIVVVVIIAVFCTRRTTSHQKKKRAACKSVNGSHKYKGNSKDVKPPDLWIHHERLELKPIDKSPDPNPIMTDTPIPRNSQDITPVDNSMDSNIHQRRNSYRGHESEDSMSTLAGRRGMRPKMMMPFDSQPPQPVISAHPIHSLDNPHHHFHSSSLASPARSHLYHPGSPWPIGTSMSLSDRANSTESVRNTPSTDTMPASSSQTCCTDHQDPEGATSSSYLASSQEEDSGQSLPTAHVRPSHPLKSFAVPAIPPPGPPTYDPALPSTPLLSQQALNHHIHSVKTASIGTLGRSRPPMPVVVPSAPEVQETTRMLEDSESSYEPDELTKEMAHLEGLMKDLNAITTA.

The signal sequence occupies residues 1–33 (MAAERGARRLLSTPSFWLYCLLLLGRRAPGAAA). Residues 34–1105 (ARSGSAPQSP…PTSPLDSNML (1072 aa)) are Extracellular-facing. Ig-like C2-type domains are found at residues 52-141 (PFYF…TIIS), 152-238 (PRFT…VELK), 243-336 (PEVI…AELT), and 341-426 (PEFL…AQLI). Asparagine 73 carries an N-linked (GlcNAc...) asparagine glycan. 3 disulfides stabilise this stretch: cysteine 74-cysteine 129, cysteine 173-cysteine 221, and cysteine 270-cysteine 320. N-linked (GlcNAc...) asparagine glycosylation occurs at asparagine 210. Residue asparagine 326 is glycosylated (N-linked (GlcNAc...) asparagine). Cysteines 362 and 410 form a disulfide. 6 Fibronectin type-III domains span residues 441–535 (APRD…TQPE), 541–631 (PAPN…TLSD), 636–731 (APQN…TFES), 741–831 (VPSS…RPHT), 856–952 (PPVG…TFEL), and 957–1054 (PPKD…TPKA). N-linked (GlcNAc...) asparagine glycosylation is found at asparagine 470 and asparagine 489. N-linked (GlcNAc...) asparagine glycans are attached at residues asparagine 639 and asparagine 715. A glycan (N-linked (GlcNAc...) asparagine) is linked at asparagine 909. Residues 1041 to 1097 (GPMSEAVQFRTPKADSSDKMPNDQASGSGGKGSRLPDLGSDYKPPMSGSNSPHGSPT) are disordered. Basic and acidic residues predominate over residues 1052–1061 (PKADSSDKMP). A compositionally biased stretch (polar residues) spans 1087 to 1097 (SGSNSPHGSPT). The helical transmembrane segment at 1106–1126 (LVIIVSVGVITIVVVVIIAVF) threads the bilayer. The Cytoplasmic segment spans residues 1127 to 1461 (CTRRTTSHQK…MKDLNAITTA (335 aa)). Disordered regions lie at residues 1138–1160 (KRAA…DVKP), 1174–1206 (PIDK…SMDS), 1235–1276 (PKMM…PARS), and 1289–1381 (TSMS…ALPS). 2 positions are modified to phosphoserine: serine 1178 and serine 1194. A compositionally biased stretch (polar residues) spans 1191-1206 (PRNSQDITPVDNSMDS). Position 1198 is a phosphothreonine (threonine 1198). Polar residues-rich tracts occupy residues 1289–1322 (TSMS…TCCT) and 1330–1349 (ATSS…QSLP). Positions 1366–1375 (AIPPPGPPTY) are enriched in pro residues. Serine 1401 carries the post-translational modification Phosphoserine. Threonine 1404 bears the Phosphothreonine mark. A phosphoserine mark is found at serine 1432, serine 1434, and serine 1435.

This sequence belongs to the immunoglobulin superfamily. DCC family. In terms of assembly, interacts with MYO10. Interacts with RGMA and RGMB. Interacts with BMP2, BMP4, BMP6, and BMP7. In terms of tissue distribution, widely expressed and also in cancer cell lines.

It localises to the cell membrane. In terms of biological role, multi-functional cell surface receptor regulating cell adhesion in many diverse developmental processes, including neural tube and mammary gland formation, myogenesis and angiogenesis. Receptor for members of the BMP, netrin, and repulsive guidance molecule (RGM) families. Netrin-Neogenin interactions result in a chemoattractive axon guidance response and cell-cell adhesion, the interaction between NEO1/Neogenin and RGMa and RGMb induces a chemorepulsive response. In Homo sapiens (Human), this protein is Neogenin (NEO1).